A 189-amino-acid chain; its full sequence is Putative manganese efflux pump MntP (189 aa).

Transmembrane regions (helical) follow at residues 3 to 23, 41 to 61, 65 to 85, 106 to 128, 141 to 161, and 168 to 188; these read PVSL…AAIG, IIFG…GQAA, VADW…LHMI, WILA…GLAF, GLAT…LGAV, and MVGG…HLSA.

It belongs to the MntP (TC 9.B.29) family.

The protein resides in the cell inner membrane. Its function is as follows. Probably functions as a manganese efflux pump. This chain is Putative manganese efflux pump MntP, found in Pseudomonas aeruginosa (strain LESB58).